The following is a 1940-amino-acid chain: MSSNYALPDVFRAMAVLTGALAKAYSVLPNDSSKTSNASDVAEASLDVARAFEEASQILKTAVSSPVVARALSETQNNGTLHDQLNSSVQNIAKASTEFSAMGDIFKYQAKAQVSLAQIKACSNAQCSPETVESNFQEAIRDYEAASSIALQYGFQSLAEQLSDAVNQLKTALSNYEKTVATLQQIKQAQASGNYWQVLNLALSLASNQQNTQSSKNIAQAANNLKSALNAPLNSNNMSQYYSNVVSAIQSFPRCTQVSTLVTTTSAVIAIQRLLQLGSSELQKAQQATQALLQSAEQMWSSAYNHAEKAYEAFSLAEQLASQFVSQELANEIEKGLEKVKQFVAEAQANMNANKNILADAFNTVVDNISNAVNDLMNWVNDLIETHIPGIVGQILAGVVDGLIFVVISLIPGVGQIIDGIIAFSFISNLVEQGIIAVKTGYGAQFLQQLEESFLQPQNIAMIATSVIGGIGLERVLADRLPDIRIGAIDAAKEKIGDLMSDFKEKISIGLHGISDDASKVLDDIKTKIKGNAVSLRDVGSTIVEKKIEVKAPDITKIDVKPEEITAKNVNVKLVKPLSTDLAKQLSEKFKSVKNLKDLKAIVKVDKEFRIPYDLQGKSMGDKTVLTADYMEGEVLGLIKNYEADVKISPTSFEKTIKGAELKPPELHAKLSSFDYTGKGILDVEQDIIDAIKTSKDISLTSDGKGVAITTDKATTIVPVKKYFDAIMTGYAKGDFSDVKVAELLSKVNSSDLARLMTDDIIKKLKDYKGSGELKIGDLVIAKEIKGDKTLYSVAKIGPDGKPQSINVVSDIDDPMFRATVYNNLLDMVKNKTEFDYLVTNLNKMKSLSPDLQTTLDRLTVKPGERSISIEGSGGKYLNVTEKSLPGGSEIRAETNLEGVKAVDALEKELDGERQATLEQLLESYKNGGFRDVKALADALGKIDKLPDTLKEALAKYFDRKMENSSLEEEVDLIKGLPKMYEDLKTKVIDPVDTFLNKLKAKGAPESEIDALRQLFYKRVLNEINAGRSLDTIDLASAFVKANEVLDKVDDVVKDLKDRGLPDNLVNDIKASMFKQIEKDVLSGKPLDINRIEFDVLRQKEDAIFNFVLDKFGFDKNLLKNLTPDQLDRFKTNVVDQFLLKHITDKNDLMDEYNNIVKGPSKVQNTTQPSATQNTTTQPTAQNTSLPGATQNTTLPTPSKVQNTTQPSTTPNTTLSTPSTTPNTTTQPTVQNTSLPGAVQNITPKDLQSIVKDPKVLDEINATVEKLKDLGLPDKLVDDIKASIFKKIENDALSGKPIDINNIWTNILMQKEDAIFNFVLDKFGFDKNLLKNLTPEQLAKFKTDVVTDFMTNRIVDKTDLMQTYMDVKATVKGPGTTQNTTTPSVAQNITLKDLQSIVKDPKVLEQVDATIKRLKDLGLPDKLVDDIKASMLEQIKKDALSGKPIDINNIWTNILMQKEDAIFDFVLDKFGFDKDLLKNLTPEQLAKFKTDVVTDFMTNRIVDKTDLMQTYMDAKTLVKGPSTTQNTTQPSTTPNMTPPKIEFKDQNVKPPGTGAGTDVNTPGSGSQTVTSGSGLQLLVKPKEIAAQEEKIKLKDLQSILPEETLERFEKLPDSLKEKVIDEIETRLRGKKVDEIEGIVNDVIDKYEKLYDSAVKDGMLNDLKNLIDAYSKKDNNATEVLTDVGKSLEVLKDLNKSVGTSVVEEAKYNSTLQTYLAGLGIKDLNNVSDKQLIKIGTDVTNTLSEKFGTPVVVLTPEEAKILVKELNDTLNDTGLNTKFKIEEVKPLPKTLEVILATLGIKNETKQRILLKELQKKLPKIRITDLIVISSKGTITPITWDDIMPTYYTNVQGQTLPIYTTQTTTTHHITPPPPPPPPPPPPPPKTQTITTTTQITPPSPPPTPPPPPPPPKSPKMPASLSPSSGNAPSEAEAEQAEQVLLI.

TPR repeat units follow at residues Ile-119–Tyr-153, Phe-155–Ile-186, Arg-480–Gly-513, and Gly-617–Ser-652. 2 disordered regions span residues Pro-1160 to Val-1239 and Lys-1519 to Ser-1571. Residues Gln-1164–Ser-1185 are compositionally biased toward low complexity. Positions Leu-1186–Lys-1200 are enriched in polar residues. Composition is skewed to low complexity over residues Val-1201 to Leu-1235, Pro-1521 to Pro-1539, and Thr-1561 to Ser-1571. One copy of the TPR 5 repeat lies at Lys-1691–Asn-1724. Positions Thr-1862 to Ile-1940 are disordered. Residues Thr-1868–Lys-1883 are compositionally biased toward pro residues. Positions Thr-1884–Thr-1894 are enriched in low complexity. Residues Pro-1895–Pro-1912 are compositionally biased toward pro residues.

In Acidianus convivator (ATV), this protein is Protein ORF1940.